We begin with the raw amino-acid sequence, 109 residues long: Somatostatin-2 (109 aa).

Positions 1–16 (MQFLASLVSFLLVVWS) are cleaved as a signal peptide. Residues 17–80 (VKATALPVED…EPLENKLEER (64 aa)) constitute a propeptide that is removed on maturation. A disulfide bridge connects residues Cys-98 and Cys-109.

The protein belongs to the somatostatin family.

It localises to the secreted. Somatostatin inhibits the release of somatotropin. This is Somatostatin-2 (sst2) from Protopterus annectens (African lungfish).